Here is a 34-residue protein sequence, read N- to C-terminus: Antimicrobial peptide Alo-1 (34 aa).

Cystine bridges form between C1–C18, C8–C22, and C17–C33.

The protein localises to the secreted. Functionally, has antifungal activity against C.glabrata. In Acrocinus longimanus (Giant harlequin beetle), this protein is Antimicrobial peptide Alo-1.